A 458-amino-acid polypeptide reads, in one-letter code: Hyaluronidase conohyal-P1 (458 aa).

The first 18 residues, 1 to 18 (MRVVVVVTGLVVVVVATA), serve as a signal peptide directing secretion. The interval 24-47 (HDVKSASSPLSSSSVYQGSSGDDC) is disordered. Residues 28–43 (SASSPLSSSSVYQGSS) show a composition bias toward low complexity. A disulfide bond links Cys-68 and Cys-342. Asn-106 and Asn-141 each carry an N-linked (GlcNAc...) asparagine glycan. Glu-151 acts as the Proton donor in catalysis. 3 N-linked (GlcNAc...) asparagine glycosylation sites follow: Asn-261, Asn-337, and Asn-359. The region spanning 363 to 434 (VMADCSTTLC…VRPSRCHKQQ (72 aa)) is the EGF-like domain. 3 disulfides stabilise this stretch: Cys-367–Cys-378, Cys-372–Cys-411, and Cys-413–Cys-422.

The protein belongs to the glycosyl hydrolase 56 family. In terms of tissue distribution, expressed by the venom duct.

It localises to the secreted. It carries out the reaction Random hydrolysis of (1-&gt;4)-linkages between N-acetyl-beta-D-glucosamine and D-glucuronate residues in hyaluronate.. In terms of biological role, hyaluronidase catalyzes the hydrolysis of hyaluronic acid (HA), an anionic, nonsulfated glycosaminoglycan distributed widely throughout connective, epithelial, and neural tissues. In venom, they are known to enhance diffusion of the venom by degrading the extracellular matrix. In Conus purpurascens (Purple cone), this protein is Hyaluronidase conohyal-P1.